We begin with the raw amino-acid sequence, 360 residues long: Peptide chain release factor 1 (360 aa).

Glutamine 237 is subject to N5-methylglutamine.

Belongs to the prokaryotic/mitochondrial release factor family. Post-translationally, methylated by PrmC. Methylation increases the termination efficiency of RF1.

The protein localises to the cytoplasm. Peptide chain release factor 1 directs the termination of translation in response to the peptide chain termination codons UAG and UAA. This chain is Peptide chain release factor 1, found in Pseudomonas fluorescens (strain ATCC BAA-477 / NRRL B-23932 / Pf-5).